We begin with the raw amino-acid sequence, 509 residues long: Bifunctional purine biosynthesis protein PurH (509 aa).

One can recognise an MGS-like domain in the interval 1 to 144 (MKRALISVSD…KNYAAVTVVV (144 aa)).

The protein belongs to the PurH family.

The catalysed reaction is (6R)-10-formyltetrahydrofolate + 5-amino-1-(5-phospho-beta-D-ribosyl)imidazole-4-carboxamide = 5-formamido-1-(5-phospho-D-ribosyl)imidazole-4-carboxamide + (6S)-5,6,7,8-tetrahydrofolate. It carries out the reaction IMP + H2O = 5-formamido-1-(5-phospho-D-ribosyl)imidazole-4-carboxamide. Its pathway is purine metabolism; IMP biosynthesis via de novo pathway; 5-formamido-1-(5-phospho-D-ribosyl)imidazole-4-carboxamide from 5-amino-1-(5-phospho-D-ribosyl)imidazole-4-carboxamide (10-formyl THF route): step 1/1. The protein operates within purine metabolism; IMP biosynthesis via de novo pathway; IMP from 5-formamido-1-(5-phospho-D-ribosyl)imidazole-4-carboxamide: step 1/1. The protein is Bifunctional purine biosynthesis protein PurH of Listeria innocua serovar 6a (strain ATCC BAA-680 / CLIP 11262).